A 232-amino-acid polypeptide reads, in one-letter code: Pyridoxal 5'-phosphate synthase subunit PdxS (232 aa).

Catalysis depends on lysine 23, which acts as the Schiff-base intermediate with D-ribose 5-phosphate. Residue glycine 95 participates in D-ribose 5-phosphate binding. Position 107 (arginine 107) interacts with D-glyceraldehyde 3-phosphate. D-ribose 5-phosphate-binding positions include glycine 156 and 177–178; that span reads GS.

It belongs to the PdxS/SNZ family. In the presence of PdxT, forms a dodecamer of heterodimers.

The catalysed reaction is aldehydo-D-ribose 5-phosphate + D-glyceraldehyde 3-phosphate + L-glutamine = pyridoxal 5'-phosphate + L-glutamate + phosphate + 3 H2O + H(+). It participates in cofactor biosynthesis; pyridoxal 5'-phosphate biosynthesis. In terms of biological role, catalyzes the formation of pyridoxal 5'-phosphate from ribose 5-phosphate (RBP), glyceraldehyde 3-phosphate (G3P) and ammonia. The ammonia is provided by the PdxT subunit. Can also use ribulose 5-phosphate and dihydroxyacetone phosphate as substrates, resulting from enzyme-catalyzed isomerization of RBP and G3P, respectively. The polypeptide is Pyridoxal 5'-phosphate synthase subunit PdxS (Clostridium novyi).